Here is a 189-residue protein sequence, read N- to C-terminus: UPF0301 protein A1E_00140 (189 aa).

It belongs to the UPF0301 (AlgH) family.

In Rickettsia canadensis (strain McKiel), this protein is UPF0301 protein A1E_00140.